We begin with the raw amino-acid sequence, 259 residues long: Proteasome subunit alpha (259 aa).

Belongs to the peptidase T1A family. As to quaternary structure, the 20S proteasome core is composed of 14 alpha and 14 beta subunits that assemble into four stacked heptameric rings, resulting in a barrel-shaped structure. The two inner rings, each composed of seven catalytic beta subunits, are sandwiched by two outer rings, each composed of seven alpha subunits. The catalytic chamber with the active sites is on the inside of the barrel. Has a gated structure, the ends of the cylinder being occluded by the N-termini of the alpha-subunits. Is capped at one or both ends by the proteasome regulatory ATPase, PAN.

The protein localises to the cytoplasm. Its activity is regulated as follows. The formation of the proteasomal ATPase PAN-20S proteasome complex, via the docking of the C-termini of PAN into the intersubunit pockets in the alpha-rings, triggers opening of the gate for substrate entry. Interconversion between the open-gate and close-gate conformations leads to a dynamic regulation of the 20S proteasome proteolysis activity. Functionally, component of the proteasome core, a large protease complex with broad specificity involved in protein degradation. The protein is Proteasome subunit alpha of Methanococcus maripaludis (strain DSM 14266 / JCM 13030 / NBRC 101832 / S2 / LL).